The chain runs to 1892 residues: Alpha-2-macroglobulin (1892 aa).

Residues 1 to 23 (MKNIFRKFVFTIFVCLINLQLIA) form the signal peptide. Positions 1441–1444 (CTEQ) form a cross-link, isoglutamyl cysteine thioester (Cys-Gln).

The protein belongs to the protease inhibitor I39 (alpha-2-macroglobulin) family. Bacterial alpha-2-macroglobulin subfamily.

Protects the bacterial cell from host peptidases. This chain is Alpha-2-macroglobulin, found in Rickettsia conorii (strain ATCC VR-613 / Malish 7).